Here is a 221-residue protein sequence, read N- to C-terminus: 21 kDa seed protein (221 aa).

The signal sequence occupies residues 1–26 (MKTATAVVLLLFAFTSKSYFFGVANA). Cys-69 and Cys-116 form a disulfide bridge.

The protein belongs to the protease inhibitor I3 (leguminous Kunitz-type inhibitor) family.

This Theobroma cacao (Cacao) protein is 21 kDa seed protein (ASP).